Reading from the N-terminus, the 401-residue chain is Chalcone synthase 5 (401 aa).

C168 is an active-site residue.

The protein belongs to the thiolase-like superfamily. Chalcone/stilbene synthases family.

The catalysed reaction is (E)-4-coumaroyl-CoA + 3 malonyl-CoA + 3 H(+) = 2',4,4',6'-tetrahydroxychalcone + 3 CO2 + 4 CoA. The protein operates within secondary metabolite biosynthesis; flavonoid biosynthesis. Its function is as follows. The primary product of this enzyme is 4,2',4',6'-tetrahydroxychalcone (also termed naringenin-chalcone or chalcone) which can under specific conditions spontaneously isomerize into naringenin. In Sorghum bicolor (Sorghum), this protein is Chalcone synthase 5 (CHS5).